Consider the following 446-residue polypeptide: Maltoporin (446 aa).

Residues 1–25 form the signal peptide; that stretch reads MMITLRKLPLAVAVAAGVMSAQAMA.

Belongs to the porin LamB (TC 1.B.3) family. Homotrimer formed of three 18-stranded antiparallel beta-barrels, containing three independent channels.

Its subcellular location is the cell outer membrane. It carries out the reaction beta-maltose(in) = beta-maltose(out). Functionally, involved in the transport of maltose and maltodextrins. In Escherichia coli O7:K1 (strain IAI39 / ExPEC), this protein is Maltoporin.